A 281-amino-acid chain; its full sequence is Ribosomal protein L11 methyltransferase (281 aa).

Positions 131, 152, 174, and 217 each coordinate S-adenosyl-L-methionine.

The protein belongs to the methyltransferase superfamily. PrmA family.

It localises to the cytoplasm. The catalysed reaction is L-lysyl-[protein] + 3 S-adenosyl-L-methionine = N(6),N(6),N(6)-trimethyl-L-lysyl-[protein] + 3 S-adenosyl-L-homocysteine + 3 H(+). In terms of biological role, methylates ribosomal protein L11. This chain is Ribosomal protein L11 methyltransferase, found in Phocaeicola vulgatus (strain ATCC 8482 / DSM 1447 / JCM 5826 / CCUG 4940 / NBRC 14291 / NCTC 11154) (Bacteroides vulgatus).